Here is a 313-residue protein sequence, read N- to C-terminus: Ankyrin repeat family A protein 2 (313 aa).

ANK repeat units lie at residues 148-180 (ANSL…HTDE), 181-213 (EGFT…LLGK), 214-246 (GRES…EYDW), 247-279 (NGGT…IETD), and 280-313 (SGYN…NIKE).

In terms of assembly, interacts (via ANK repeats) with CCDC8 (via PxLPxI/L motif); mediates the interaction with the 3M complex which is composed of CCDC8, CUL7 and OBSL1. Interacts (via ANK repeats) with HDAC4 (via PxLPxI/L motif). Interacts (via ANK repeats) with HDAC5 (via PxLPxI/L motif). Interacts (via ANK repeats) with LRP2/megalin (via PxLPxI/L motif). Interacts (via ANK repeats) with RFX7 (via PxLPxI/L motif). Interacts with AHRR. Interacts with NEK6.

It localises to the cytoplasm. Its subcellular location is the cytoskeleton. The protein resides in the membrane. In terms of biological role, may regulate the interaction between the 3M complex and the histone deacetylases HDAC4 and HDAC5. May also regulate LRP2/megalin. The sequence is that of Ankyrin repeat family A protein 2 (ANKRA2) from Bos taurus (Bovine).